Consider the following 555-residue polypeptide: Formate--tetrahydrofolate ligase (555 aa).

An ATP-binding site is contributed by Thr64–Thr71.

This sequence belongs to the formate--tetrahydrofolate ligase family.

The enzyme catalyses (6S)-5,6,7,8-tetrahydrofolate + formate + ATP = (6R)-10-formyltetrahydrofolate + ADP + phosphate. It functions in the pathway one-carbon metabolism; tetrahydrofolate interconversion. The sequence is that of Formate--tetrahydrofolate ligase from Parabacteroides distasonis (strain ATCC 8503 / DSM 20701 / CIP 104284 / JCM 5825 / NCTC 11152).